A 907-amino-acid polypeptide reads, in one-letter code: Chloride channel protein 2 (907 aa).

At 1–93 (MAAATAAAAT…RCHKFLVSRV (93 aa)) the chain is on the cytoplasmic side. The tract at residues 22–40 (QYEQTLMYGRYTQELGAFA) is essential for channel gating by both voltage and cell volume. Threonine 26 is subject to Phosphothreonine. The segment at 42 to 55 (EEAARIRLGGPEPW) is modulates channel gating by both voltage and cell volume. Transmembrane regions (helical) follow at residues 94-127 (GEDW…AQQW) and 136-161 (ILLQ…TQIL). A Selectivity filter part_1 motif is present at residues 167-171 (GSGIP). The segment at residues 170–177 (IPEMKTIL) is an intramembrane region (helical). 2 helical membrane-spanning segments follow: residues 186–204 (LTLK…ALGS) and 211–229 (EGPF…SKFL). Positions 209–213 (GKEGP) match the Selectivity filter part_2 motif. 2 consecutive intramembrane regions (helical) follow at residues 245–257 (MLAA…VGCC) and 261–269 (PIGGVLFSI). Transmembrane regions (helical) follow at residues 281–301 (YWRG…LAVW), 327–355 (LPAF…VQVM), 364–383 (FLMK…ISTL), 435–455 (ANVF…SALA), and 463–486 (GAFM…MAAW). A Selectivity filter part_3 motif is present at residues 463 to 467 (GAFMP). Positions 503–517 (GGYAVVGAAALAGAV) form an intramembrane region, helical. An intramembrane region (note=Loop between two helices) is located at residues 518-519 (TH). An intramembrane region (helical) is located at residues 520-531 (TVSTAVIVFELT). Positions 532 to 536 (GQIAH) form an intramembrane region, note=Loop between two helices. A helical membrane pass occupies residues 537-554 (ILPVMIAVILANAVAQSL). At 555–907 (QPSLYDSIIR…TPSDSDDKCQ (353 aa)) the chain is on the cytoplasmic side. In terms of domain architecture, CBS 1 spans 590–648 (MVRDVPHVALSCTFRDLRLALHRTKGRMLALVESPESMILLGSIERSQVVALLGAQLSP). Basic residues predominate over residues 650–660 (RRRQHMQKLRK). A disordered region spans residues 650-720 (RRRQHMQKLR…NATSLQEGTT (71 aa)). The span at 664-678 (SPPSDQESPPSSETS) shows a compositional bias: low complexity. Over residues 696–705 (QTHKPLKPAL) the composition is skewed to basic residues. The segment covering 710 to 720 (SNATSLQEGTT) has biased composition (polar residues). Serine 767 is subject to Phosphoserine. One can recognise a CBS 2 domain in the interval 799 to 859 (IDPAPFQLVE…GSVTAQGVKV (61 aa)). The short motif at 821–822 (LL) is the Basolateral membrane sorting element. A disordered region spans residues 865-907 (SFRDSATSSSDTETTEVHALWGPRSRHGLPREGTPSDSDDKCQ).

This sequence belongs to the chloride channel (TC 2.A.49) family. ClC-2/CLCN2 subfamily. In terms of assembly, homodimer. Interacts with auxiliary subunit HEPACAM. In terms of processing, phosphorylated. Activated by dephosphorylation. Ubiquitously expressed. Expressed in neurons and glial cells (at protein level).

Its subcellular location is the cell membrane. The protein localises to the basolateral cell membrane. It localises to the cell projection. The protein resides in the dendritic spine membrane. It is found in the axon. It carries out the reaction chloride(in) = chloride(out). It catalyses the reaction thiocyanate(in) = thiocyanate(out). The enzyme catalyses bromide(in) = bromide(out). The catalysed reaction is nitrate(in) = nitrate(out). It carries out the reaction iodide(out) = iodide(in). With respect to regulation, common gate kinetics are down-regulated by intracellular ATP. Inhibited by AK-42, a derivative of meclofenamate. Inhibited by Cd(2+). Inhibited by Zn(2+) and PKC activation. Inhibited at acidic pH. CCLN2:HEPACAM channel conductance is up-regulated upon hypo-osmolarity. In terms of biological role, voltage-gated and osmosensitive chloride channel. Forms a homodimeric channel where each subunit has its own ion conduction pathway. Conducts double-barreled currents controlled by two types of gates, two fast glutamate gates that control each subunit independently and a slow common gate that opens and shuts off both subunits simultaneously. Displays inward rectification currents activated upon membrane hyperpolarization and extracellular hypotonicity. Contributes to chloride conductance involved in neuron excitability. In hippocampal neurons, generates a significant part of resting membrane conductance and provides an additional chloride efflux pathway to prevent chloride accumulation in dendrites upon GABA receptor activation. In glia, associates with the auxiliary subunit HEPACAM/GlialCAM at astrocytic processes and myelinated fiber tracts where it may regulate transcellular chloride flux buffering extracellular chloride and potassium concentrations. Regulates aldosterone production in adrenal glands. The opening of CLCN2 channels at hyperpolarized membrane potentials in the glomerulosa causes cell membrane depolarization, activation of voltage-gated calcium channels and increased expression of aldosterone synthase, the rate-limiting enzyme for aldosterone biosynthesis. Contributes to chloride conductance in retinal pigment epithelium involved in phagocytosis of shed photoreceptor outer segments and photoreceptor renewal. Conducts chloride currents at the basolateral membrane of epithelial cells with a role in chloride reabsorption rather than secretion. Permeable to small monovalent anions with chloride &gt; thiocyanate &gt; bromide &gt; nitrate &gt; iodide ion selectivity. In Rattus norvegicus (Rat), this protein is Chloride channel protein 2 (Clcn2).